A 56-amino-acid chain; its full sequence is Large ribosomal subunit protein bL32 (56 aa).

The disordered stretch occupies residues 1 to 26; sequence MAVQQNKKSRSKRGMRRSHDALSTAQ. The span at 7–16 shows a compositional bias: basic residues; it reads KKSRSKRGMR.

The protein belongs to the bacterial ribosomal protein bL32 family.

The sequence is that of Large ribosomal subunit protein bL32 from Shewanella denitrificans (strain OS217 / ATCC BAA-1090 / DSM 15013).